Consider the following 663-residue polypeptide: MTMVEHYPFKIHSDFEPQGDQPQAIKEIVEGIKAGKRHQTLLGATGTGKTFTMSNVIKEVGKPTLIIAHNKTLAGQLYSEFKEFFPENRVEYFVSYYDYYQPEAYVPSTDTFIEKDASINDEIDQLRHSATSALFERDDVIIIASVSCIYGLGNPEEYKDLVVSVRVGMEMDRSELLRKLVDVQYTRNDIDFQRGTFRVRGDVVEIFPASKEELCIRVEFFGDEIDRIREVNYLTGEVLKEREHFAIFPASHFVTREEKLKVAIERIEKELEERLKELRDENKLLEAQRLEQRTNYDLEMMREMGFCSGIENYSVHLTLRPLGSTPYTLLDYFGDDWLVMIDESHVTLPQVRGMYNGDRARKQVLVDHGFRLPSALDNRPLKFEEFEEKTKQLVYVSATPGPYEIEHTDKMVEQIIRPTGLLDPKIEVRPTENQIDDLLSEIQTRVERNERVLVTTLTKKMSEDLTTYMKEAGIKVNYLHSEIKTLERIEIIRDLRMGTYDVIVGINLLREGIDIPEVSLVVILDADKEGFLRSNRSLIQTIGRAARNDKGEVIMYADKMTDSMKYAIDETQRRREIQMKHNEKHGITPKTINKKIHDLISATVENDENNDKAQTVIPKKMTKKERQKTIDNIEKEMKQAAKDLDFEKATELRDMLFELKAEG.

A Helicase ATP-binding domain is found at 30–417 (EGIKAGKRHQ…TDKMVEQIIR (388 aa)). Residue 43–50 (GATGTGKT) participates in ATP binding. The short motif at 96–119 (YYDYYQPEAYVPSTDTFIEKDASI) is the Beta-hairpin element. Residues 434–600 (QIDDLLSEIQ…TINKKIHDLI (167 aa)) form the Helicase C-terminal domain. The UVR domain occupies 627 to 662 (QKTIDNIEKEMKQAAKDLDFEKATELRDMLFELKAE).

This sequence belongs to the UvrB family. As to quaternary structure, forms a heterotetramer with UvrA during the search for lesions. Interacts with UvrC in an incision complex.

The protein localises to the cytoplasm. Its function is as follows. The UvrABC repair system catalyzes the recognition and processing of DNA lesions. A damage recognition complex composed of 2 UvrA and 2 UvrB subunits scans DNA for abnormalities. Upon binding of the UvrA(2)B(2) complex to a putative damaged site, the DNA wraps around one UvrB monomer. DNA wrap is dependent on ATP binding by UvrB and probably causes local melting of the DNA helix, facilitating insertion of UvrB beta-hairpin between the DNA strands. Then UvrB probes one DNA strand for the presence of a lesion. If a lesion is found the UvrA subunits dissociate and the UvrB-DNA preincision complex is formed. This complex is subsequently bound by UvrC and the second UvrB is released. If no lesion is found, the DNA wraps around the other UvrB subunit that will check the other stand for damage. The chain is UvrABC system protein B from Staphylococcus aureus (strain COL).